Here is a 291-residue protein sequence, read N- to C-terminus: Cell division protein FtsX (291 aa).

At 1–18 (MSSNFDKFQKRRLISSYF) the chain is on the cytoplasmic side. Residues 19–39 (SVVLSVFLVLFLLGVLGLFII) form a helical membrane-spanning segment. Residues 40 to 162 (NSKKLADDFK…VNLVNDNIKK (123 aa)) lie on the Periplasmic side of the membrane. A helical membrane pass occupies residues 163 to 183 (VSMWILIISGFLTVIAVLLIN). The Cytoplasmic segment spans residues 184 to 220 (SSLRLSIHSNRFIIKTMQMVGATKSFIRKPFVMRSVK). Residues 221–241 (LGMLGALLAIIALIGLLFYVE) traverse the membrane as a helical segment. At 242–253 (TNFPGLGILEDK) the chain is on the periplasmic side. The chain crosses the membrane as a helical span at residues 254 to 274 (ALIGLVLLAVFGLGVLITWVS). At 275–291 (THFATQRFLNLRTDDLY) the chain is on the cytoplasmic side.

Belongs to the ABC-4 integral membrane protein family. FtsX subfamily.

It localises to the cell inner membrane. In terms of biological role, required for cell division and gliding motility. The polypeptide is Cell division protein FtsX (Flavobacterium johnsoniae (strain ATCC 17061 / DSM 2064 / JCM 8514 / BCRC 14874 / CCUG 350202 / NBRC 14942 / NCIMB 11054 / UW101) (Cytophaga johnsonae)).